The chain runs to 1278 residues: Mediator of RNA polymerase II transcription subunit 16 (1278 aa).

Residues 1–10 show a composition bias toward acidic residues; sequence MNQQNPEEEV. Disordered stretches follow at residues 1 to 21, 530 to 557, and 839 to 861; these read MNQQNPEEEVSLVNNSGGGGI, TKDFKNHQVAAAGPSVDAPKEPDSGDEK, and SAGTGSNRNNVTSPTQNASSPAT. The span at 547 to 557 shows a compositional bias: basic and acidic residues; that stretch reads APKEPDSGDEK. A compositionally biased stretch (polar residues) spans 841–861; that stretch reads GTGSNRNNVTSPTQNASSPAT.

The protein belongs to the plant Mediator complex subunit 16 family. Component of the Mediator complex.

The protein resides in the nucleus. Its function is as follows. Component of the Mediator complex, a coactivator involved in the regulated transcription of nearly all RNA polymerase II-dependent genes. Mediator functions as a bridge to convey information from gene-specific regulatory proteins to the basal RNA polymerase II transcription machinery. The Mediator complex, having a compact conformation in its free form, is recruited to promoters by direct interactions with regulatory proteins and serves for the assembly of a functional preinitiation complex with RNA polymerase II and the general transcription factors. Involved in the regulation of the circadian clock, in the control of flowering time, in freezing- and osmotic-stress tolerance and in both salicylic acid- and jasmonate-mediated defense gene expression. In Arabidopsis thaliana (Mouse-ear cress), this protein is Mediator of RNA polymerase II transcription subunit 16 (MED16).